A 667-amino-acid chain; its full sequence is Homeobox protein 3 (667 aa).

Disordered stretches follow at residues 44 to 108 (FFQP…NSSI), 179 to 232 (NNNN…TVYN), 249 to 268 (NNNN…VNNN), and 331 to 418 (STNK…YQKQ). Residues 52–63 (LPPPTNQQPQPQ) are compositionally biased toward pro residues. Residues 75–96 (CNSSFENSPQQPTSPLLISSQT) are compositionally biased toward polar residues. Residues 97 to 108 (SYPSDLSSNSSI) show a composition bias toward low complexity. The span at 334–343 (KRMKISHHSH) shows a compositional bias: basic residues. Low complexity predominate over residues 344-379 (SLSNNNENSLSQPYFNNNNNNNNENENVYNIVNEQN). The span at 380-390 (PTFNPNQSNTH) shows a compositional bias: polar residues. Residues 386 to 454 (QSNTHQQQEE…ENENVICSEF (69 aa)) adopt a coiled-coil conformation. The homeobox DNA-binding region spans 602–664 (EFKSRRILSE…NKRMRDKSNK (63 aa)).

The protein resides in the nucleus. In terms of biological role, putative transcription factor. The polypeptide is Homeobox protein 3 (hbx3) (Dictyostelium discoideum (Social amoeba)).